Consider the following 990-residue polypeptide: A-type ATP synthase subunit B (990 aa).

Residues valine 491–valine 614 enclose the DOD-type homing endonuclease domain.

Belongs to the ATPase alpha/beta chains family. As to quaternary structure, has multiple subunits with at least A(3), B(3), C, D, E, F, H, I and proteolipid K(x). In terms of processing, this protein undergoes a protein self splicing that involves a post-translational excision of the VDE intervening region (intein) followed by peptide ligation.

It is found in the cell membrane. Component of the A-type ATP synthase that produces ATP from ADP in the presence of a proton gradient across the membrane. The B chain is a regulatory subunit. This chain is A-type ATP synthase subunit B, found in Methanopyrus kandleri (strain AV19 / DSM 6324 / JCM 9639 / NBRC 100938).